A 250-amino-acid polypeptide reads, in one-letter code: UPF0524 protein C3orf70 (250 aa).

The tract at residues 201–250 is disordered; that stretch reads ESCDEDTEEGAELSSEEDYSPESSWEPDECTLLSPSQSDLEVIETIETTV. The segment covering 202-229 has biased composition (acidic residues); that stretch reads SCDEDTEEGAELSSEEDYSPESSWEPDE.

It belongs to the UPF0524 family.

Functionally, may play a role in neuronal and neurobehavioral development. This Homo sapiens (Human) protein is UPF0524 protein C3orf70 (C3orf70).